The primary structure comprises 82 residues: uncharacterized protein (82 aa).

A run of 2 helical transmembrane segments spans residues 29–49 and 55–75; these read LMNA…GIII and WSLP…LTFF.

The protein resides in the cell membrane. This is an uncharacterized protein from Escherichia coli (strain K12).